We begin with the raw amino-acid sequence, 174 residues long: Inosine/xanthosine triphosphatase (174 aa).

Residue aspartate 68 coordinates Mg(2+). 68 to 69 lines the substrate pocket; the sequence is DA.

Belongs to the YjjX NTPase family. Homodimer. Requires Mg(2+) as cofactor. Mn(2+) serves as cofactor.

It catalyses the reaction XTP + H2O = XDP + phosphate + H(+). It carries out the reaction ITP + H2O = IDP + phosphate + H(+). Its function is as follows. Phosphatase that hydrolyzes non-canonical purine nucleotides such as XTP and ITP to their respective diphosphate derivatives. Probably excludes non-canonical purines from DNA/RNA precursor pool, thus preventing their incorporation into DNA/RNA and avoiding chromosomal lesions. The sequence is that of Inosine/xanthosine triphosphatase from Photobacterium profundum (strain SS9).